The following is a 609-amino-acid chain: Phosphoenolpyruvate carboxykinase [GTP] (609 aa).

Substrate contacts are provided by residues R81 and 220–222 (YGG). Mn(2+) contacts are provided by K229 and H249. S271 is a binding site for substrate. 272–277 (ACGKTN) is a binding site for GTP. Residue C273 is part of the active site. A Mn(2+)-binding site is contributed by D296. Position 387 to 389 (387 to 389 (NSR)) interacts with substrate. GTP-binding positions include R389, R420, and 515-518 (FGEN).

It belongs to the phosphoenolpyruvate carboxykinase [GTP] family. In terms of assembly, monomer. It depends on Mn(2+) as a cofactor.

Its subcellular location is the cytoplasm. It carries out the reaction oxaloacetate + GTP = phosphoenolpyruvate + GDP + CO2. It participates in carbohydrate biosynthesis; gluconeogenesis. Catalyzes the conversion of oxaloacetate (OAA) to phosphoenolpyruvate (PEP), the rate-limiting step in the metabolic pathway that produces glucose from lactate and other precursors derived from the citric acid cycle. The protein is Phosphoenolpyruvate carboxykinase [GTP] of Mycobacterium ulcerans (strain Agy99).